Here is a 362-residue protein sequence, read N- to C-terminus: 3-dehydroquinate synthase (362 aa).

Residues 71 to 76, 105 to 109, 129 to 130, K142, K151, and 169 to 172 each bind NAD(+); these read DGEQYK, GVVGD, TT, and CLKT. Zn(2+)-binding residues include E184, H247, and H264.

Belongs to the sugar phosphate cyclases superfamily. Dehydroquinate synthase family. Requires Co(2+) as cofactor. Zn(2+) serves as cofactor. NAD(+) is required as a cofactor.

Its subcellular location is the cytoplasm. It catalyses the reaction 7-phospho-2-dehydro-3-deoxy-D-arabino-heptonate = 3-dehydroquinate + phosphate. Its pathway is metabolic intermediate biosynthesis; chorismate biosynthesis; chorismate from D-erythrose 4-phosphate and phosphoenolpyruvate: step 2/7. Catalyzes the conversion of 3-deoxy-D-arabino-heptulosonate 7-phosphate (DAHP) to dehydroquinate (DHQ). The sequence is that of 3-dehydroquinate synthase from Shigella dysenteriae serotype 1 (strain Sd197).